A 218-amino-acid polypeptide reads, in one-letter code: Large ribosomal subunit protein bL25 (218 aa).

Residues 185–218 (ARAAEEEAPAAEETTAEPELVRERREPRAEEEEE) are disordered. Positions 190–200 (EEAPAAEETTA) are enriched in acidic residues. The span at 203–212 (ELVRERREPR) shows a compositional bias: basic and acidic residues.

Belongs to the bacterial ribosomal protein bL25 family. CTC subfamily. In terms of assembly, part of the 50S ribosomal subunit; part of the 5S rRNA/L5/L18/L25 subcomplex. Contacts the 5S rRNA. Binds to the 5S rRNA independently of L5 and L18.

In terms of biological role, this is one of the proteins that binds to the 5S RNA in the ribosome where it forms part of the central protuberance. The protein is Large ribosomal subunit protein bL25 of Roseiflexus castenholzii (strain DSM 13941 / HLO8).